Reading from the N-terminus, the 367-residue chain is Heme A synthase (367 aa).

8 helical membrane passes run 26–46 (IRGW…VGGA), 111–131 (LLAR…WVTG), 139–159 (LPLL…WWMV), 174–194 (LATH…IYRG), 212–232 (AAVI…VAGL), 272–292 (FVHR…MIAA), 305–325 (SVLL…TLLL), and 327–347 (VPIG…GFAI). Heme is bound at residue His274. His335 lines the heme pocket.

Belongs to the COX15/CtaA family. Type 2 subfamily. Interacts with CtaB. Requires heme b as cofactor.

The protein localises to the cell membrane. The enzyme catalyses Fe(II)-heme o + 2 A + H2O = Fe(II)-heme a + 2 AH2. It functions in the pathway porphyrin-containing compound metabolism; heme A biosynthesis; heme A from heme O: step 1/1. Its function is as follows. Catalyzes the conversion of heme O to heme A by two successive hydroxylations of the methyl group at C8. The first hydroxylation forms heme I, the second hydroxylation results in an unstable dihydroxymethyl group, which spontaneously dehydrates, resulting in the formyl group of heme A. This Sinorhizobium medicae (strain WSM419) (Ensifer medicae) protein is Heme A synthase.